A 377-amino-acid chain; its full sequence is SH2/SH3 adapter protein Nck1 (377 aa).

An N-acetylalanine modification is found at A2. An SH3 1 domain is found at 2-61; that stretch reads AEEVVVVAKFDYVAQQEQELDIKKNERLWLLDDSKSWWRVRNSMNKTGFVPSNYVERKNS. Phosphoserine is present on residues S85, S91, and S96. Phosphotyrosine is present on Y105. An SH3 2 domain is found at 106–165; sequence DLNMPAFVKFNYMAEREDELSLIKGTKVIVMEKCSDGWWRGSYNGQIGWFPSNYVTEEGD. Residue S166 is modified to Phosphoserine. The 63-residue stretch at 190-252 folds into the SH3 3 domain; it reads QVLHVVQALY…PKNYVTIMQN (63 aa). The SH2 domain occupies 282-376; sequence WYYGKVTRHQ…GEKLYLVKHL (95 aa).

Interacts (via SH2 domain and SH3 domain 2) with EGFR. Interacts with PAK1 and SOS1. Interacts (via SH3 domains) with PKN2. Associates with BLNK, PLCG1, VAV1 and NCK1 in a B-cell antigen receptor-dependent fashion. Interacts with SOCS7. This interaction is required for nuclear import. Part of a complex containing PPP1R15B, PP1 and NCK1. Interacts with RALGPS1. Interacts with CAV2 (tyrosine phosphorylated form). Interacts with ADAM15. Interacts with FASLG. Directly interacts with RASA1. Interacts with isoform 4 of MINK1. Interacts with FLT1 (tyrosine phosphorylated). Interacts with KDR (tyrosine phosphorylated). Interacts (via SH2 domain) with EPHB1; activates the JUN cascade to regulate cell adhesion. Interacts with EPHA2. Interacts (via SH2 domain) with PDGFRB (tyrosine phosphorylated). Interacts with the inactive form of EIF2AK2/PKR. Interacts with PTPN1. Interacts with INSR/insulin receptor (in response to insulin stimulation); this interaction may mediate PTPN1 recruitment leading to INSR dephosphorylation. Interacts with CD3E (via Proline-rich sequence); the interaction is ligand dependent but independent of tyrosine kinase activation. Interacts with EGFR. Interacts with IRS1. In terms of processing, phosphorylated on Ser and Tyr residues. Phosphorylated in response to activation of EGFR and FcERI. Phosphorylated by activated PDGFRB.

The protein resides in the cytoplasm. The protein localises to the endoplasmic reticulum. Its subcellular location is the nucleus. In terms of biological role, adapter protein which associates with tyrosine-phosphorylated growth factor receptors, such as KDR and PDGFRB, or their cellular substrates. Maintains low levels of EIF2S1 phosphorylation by promoting its dephosphorylation by PP1. Plays a role in the DNA damage response, not in the detection of the damage by ATM/ATR, but for efficient activation of downstream effectors, such as that of CHEK2. Plays a role in ELK1-dependent transcriptional activation in response to activated Ras signaling. Modulates the activation of EIF2AK2/PKR by dsRNA. May play a role in cell adhesion and migration through interaction with ephrin receptors. Also acts as an adpater protein for the T cell receptor complex (TCR-CD3E). Upon ligand engagement, is recruited by CD3E and promotes maturation of the immune synapse and T cell activation. The sequence is that of SH2/SH3 adapter protein Nck1 (Nck1) from Mus musculus (Mouse).